Reading from the N-terminus, the 276-residue chain is Undecaprenyl-diphosphatase (276 aa).

6 helical membrane-spanning segments follow: residues 43-63 (RAMA…VWEF), 85-105 (ANLL…ADLI), 109-129 (LFNP…MLWA), 183-203 (AATE…AVYS), 214-234 (SDLP…MIAV), and 249-269 (FAWY…FGWV).

It belongs to the UppP family.

The protein resides in the cell inner membrane. The enzyme catalyses di-trans,octa-cis-undecaprenyl diphosphate + H2O = di-trans,octa-cis-undecaprenyl phosphate + phosphate + H(+). Its function is as follows. Catalyzes the dephosphorylation of undecaprenyl diphosphate (UPP). Confers resistance to bacitracin. The polypeptide is Undecaprenyl-diphosphatase (Pseudomonas putida (strain W619)).